A 1188-amino-acid polypeptide reads, in one-letter code: Meiotically up-regulated gene 190 protein (1188 aa).

The span at 1–11 shows a compositional bias: polar residues; the sequence is MSTHSGDSTKQ. Disordered regions lie at residues 1 to 61 and 83 to 125; these read MSTH…DPIT and FTVP…EADN. Residues 41-61 are compositionally biased toward basic and acidic residues; it reads EKKEEQQREQTENEKLFDPIT. Over residues 84 to 112 the composition is skewed to polar residues; sequence TVPNQSIQGSSLPSEKPYLSSNQPTNVYK. Residues 173-193 traverse the membrane as a helical segment; sequence LVISWFFTHSIIISAVLPLAI. One can recognise an SMP-LTD domain in the interval 228-453; sequence IPESAEWMNH…SPKSMTIDLS (226 aa). The disordered stretch occupies residues 298 to 318; the sequence is ASESFSEKQASEAEHKDEPEQ. The span at 302–318 shows a compositional bias: basic and acidic residues; sequence FSEKQASEAEHKDEPEQ. C2 domains are found at residues 451 to 576 and 636 to 781; these read DLSK…ERCD and KEEE…TKWY. Ca(2+) is bound by residues D485, D491, D544, D546, S549, and D552. Disordered regions lie at residues 615-639 and 1002-1066; these read TIPRSMRDDPAFQNPHGSLDNKEEE and QRAS…GTMN. S1005 carries the phosphoserine modification. Positions 1022–1032 are enriched in acidic residues; it reads DDSVDTEDEET.

Ca(2+) serves as cofactor.

The protein localises to the cytoplasm. Its subcellular location is the endoplasmic reticulum membrane. It localises to the nucleus membrane. The protein resides in the cytoskeleton. It is found in the microtubule organizing center. The protein localises to the spindle pole body. Has a role in meiosis. This is Meiotically up-regulated gene 190 protein (mug190) from Schizosaccharomyces pombe (strain 972 / ATCC 24843) (Fission yeast).